Reading from the N-terminus, the 371-residue chain is Cytochrome b (371 aa).

Transmembrane regions (helical) follow at residues F25–I45, W69–I90, W105–L125, and F170–I190. Residues H75 and H89 each contribute to the heme b site. 2 residues coordinate heme b: H174 and H188. An a ubiquinone-binding site is contributed by H193. 4 consecutive transmembrane segments (helical) span residues Y218 to S238, L280 to H300, F312 to T332, and F339 to P358.

This sequence belongs to the cytochrome b family. The cytochrome bc1 complex contains 3 respiratory subunits (MT-CYB, CYC1 and UQCRFS1), 2 core proteins (UQCRC1 and UQCRC2) and probably 6 low-molecular weight proteins. Heme b is required as a cofactor.

The protein resides in the mitochondrion inner membrane. Its function is as follows. Component of the ubiquinol-cytochrome c reductase complex (complex III or cytochrome b-c1 complex) that is part of the mitochondrial respiratory chain. The b-c1 complex mediates electron transfer from ubiquinol to cytochrome c. Contributes to the generation of a proton gradient across the mitochondrial membrane that is then used for ATP synthesis. This Elapognathus coronatus (Western crowned snake) protein is Cytochrome b (MT-CYB).